Reading from the N-terminus, the 177-residue chain is Large ribosomal subunit protein uL6 (177 aa).

It belongs to the universal ribosomal protein uL6 family. As to quaternary structure, part of the 50S ribosomal subunit.

In terms of biological role, this protein binds to the 23S rRNA, and is important in its secondary structure. It is located near the subunit interface in the base of the L7/L12 stalk, and near the tRNA binding site of the peptidyltransferase center. In Rhodopseudomonas palustris (strain HaA2), this protein is Large ribosomal subunit protein uL6.